The sequence spans 178 residues: MKVAAATRNPNKLRAIREAYRTFGFPAEVVPVDKPPGAPPQPIGLDAVAKWALERARHALAAAPGADHGVGIEAGVVEVAGYHLDITIAAIVDREGYVTVGTSPAFQIPTALLHDVLQGRELGATAEAHYGRPAVGYREGIIGLLTRGVVKRIDLNYAAVLMALTPRLPHNAPHYRKA.

Belongs to the YjjX NTPase family. Homodimer. Mg(2+) serves as cofactor. The cofactor is Mn(2+).

The catalysed reaction is XTP + H2O = XDP + phosphate + H(+). It carries out the reaction ITP + H2O = IDP + phosphate + H(+). In terms of biological role, phosphatase that hydrolyzes non-canonical purine nucleotides such as XTP and ITP to their respective diphosphate derivatives. Probably excludes non-canonical purines from DNA/RNA precursor pool, thus preventing their incorporation into DNA/RNA and avoiding chromosomal lesions. This is Probable inosine/xanthosine triphosphatase from Pyrobaculum calidifontis (strain DSM 21063 / JCM 11548 / VA1).